The following is a 577-amino-acid chain: Glycine--tRNA ligase (577 aa).

Residues Arg-98 and Glu-164 each contribute to the substrate site. Residues 196–198 (RNE), 206–211 (IRLREF), 328–329 (EC), and 451–454 (GIDR) contribute to the ATP site. 211-215 (FTQAE) lines the substrate pocket. Residue 447 to 451 (EPSYG) coordinates substrate.

Belongs to the class-II aminoacyl-tRNA synthetase family.

The protein localises to the cytoplasm. The catalysed reaction is tRNA(Gly) + glycine + ATP = glycyl-tRNA(Gly) + AMP + diphosphate. Catalyzes the attachment of glycine to tRNA(Gly). This is Glycine--tRNA ligase from Methanocaldococcus jannaschii (strain ATCC 43067 / DSM 2661 / JAL-1 / JCM 10045 / NBRC 100440) (Methanococcus jannaschii).